The sequence spans 69 residues: Dodecin (69 aa).

Position 3–5 (3–5 (KVY)) interacts with FMN. Residues Lys-6, Arg-28, and 32-34 (TLR) contribute to the CoA site. Residues Asp-37, Trp-38, Arg-45, Gln-57, and Arg-65 each contribute to the FMN site. 65–67 (RLE) contributes to the CoA binding site.

The protein belongs to the dodecin family. As to quaternary structure, homododecamer; four homotrimers assemble to form a dodecameric hollow sphere with an outer diameter of about 60 Angstroms. Flavin dimers are bound between subunits with a stoichiometry of 6 flavin dimers per dodecamer. Besides, trimeric coenzyme A molecules can be bound between subunits. A dodecamer can bind simultaneously 12 flavin and 12 coenzyme A molecules.

Functionally, may function as storage protein that sequesters various flavins and other cofactors, thereby protecting the cell against undesirable reactions mediated by the free cofactors. Binds and sequesters FMN, FAD, lumiflavin and lumichrome, and can also bind coenzyme A. The sequence is that of Dodecin from Thermus thermophilus (strain ATCC 27634 / DSM 579 / HB8).